The following is a 300-amino-acid chain: Zinc finger CCCH domain-containing protein 14 (300 aa).

A disordered region spans residues 1-38; it reads MEVGGRKRGKPDGANGAGGKRARESESFQTGVGSKSKP. 2 consecutive C3H1-type zinc fingers follow at residues 33–61 and 99–127; these read GSKSKPCTKFFSTSGCPFGEGCHFLHHFP and TVKTRLCNKYNTAEGCKWGDKCHFAHGER. The region spanning 170–234 is the KH domain; it reads SATAKISVDA…DQIKNASAMV (65 aa). The tract at residues 243–262 is disordered; the sequence is GGAPPQGKKPVGGSHRGGGP. A C3H1-type 3 zinc finger spans residues 265-292; it reads NFKTKLCENFTKGSCTFGDRCHFAHGEN.

This chain is Zinc finger CCCH domain-containing protein 14, found in Oryza sativa subsp. japonica (Rice).